The primary structure comprises 463 residues: A-type ATP synthase subunit B (463 aa).

It belongs to the ATPase alpha/beta chains family. As to quaternary structure, has multiple subunits with at least A(3), B(3), C, D, E, F, H, I and proteolipid K(x).

The protein localises to the cell membrane. Component of the A-type ATP synthase that produces ATP from ADP in the presence of a proton gradient across the membrane. The B chain is a regulatory subunit. This is A-type ATP synthase subunit B from Thermococcus gammatolerans (strain DSM 15229 / JCM 11827 / EJ3).